A 693-amino-acid polypeptide reads, in one-letter code: Polyphosphate kinase (693 aa).

N57 serves as a coordination point for ATP. R383 and R413 together coordinate Mg(2+). H443 serves as the catalytic Phosphohistidine intermediate. Residues Y476, R572, and H601 each contribute to the ATP site.

The protein belongs to the polyphosphate kinase 1 (PPK1) family. Mg(2+) is required as a cofactor. An intermediate of this reaction is the autophosphorylated ppk in which a phosphate is covalently linked to a histidine residue through a N-P bond.

It carries out the reaction [phosphate](n) + ATP = [phosphate](n+1) + ADP. In terms of biological role, catalyzes the reversible transfer of the terminal phosphate of ATP to form a long-chain polyphosphate (polyP). This chain is Polyphosphate kinase, found in Acinetobacter baumannii (strain ATCC 17978 / DSM 105126 / CIP 53.77 / LMG 1025 / NCDC KC755 / 5377).